The sequence spans 858 residues: Leucine--tRNA ligase (858 aa).

The 'HIGH' region motif lies at 42–52 (PYPSGRLHMGH). The 'KMSKS' region motif lies at 618–622 (KMSKS). K621 is a binding site for ATP.

The protein belongs to the class-I aminoacyl-tRNA synthetase family.

It localises to the cytoplasm. It carries out the reaction tRNA(Leu) + L-leucine + ATP = L-leucyl-tRNA(Leu) + AMP + diphosphate. This Aeromonas salmonicida (strain A449) protein is Leucine--tRNA ligase.